Here is a 507-residue protein sequence, read N- to C-terminus: Phospho-2-dehydro-3-deoxyheptonate aldolase 2, chloroplastic (507 aa).

The protein belongs to the class-II DAHP synthase family.

The protein resides in the plastid. It is found in the chloroplast. It catalyses the reaction D-erythrose 4-phosphate + phosphoenolpyruvate + H2O = 7-phospho-2-dehydro-3-deoxy-D-arabino-heptonate + phosphate. The protein operates within metabolic intermediate biosynthesis; chorismate biosynthesis; chorismate from D-erythrose 4-phosphate and phosphoenolpyruvate: step 1/7. This Arabidopsis thaliana (Mouse-ear cress) protein is Phospho-2-dehydro-3-deoxyheptonate aldolase 2, chloroplastic (DHS2).